The chain runs to 126 residues: Small ribosomal subunit protein uS13 (126 aa).

Residues 94-126 are disordered; that stretch reads RGLPVHGQRTSTNARTRKGPRRAIAGKKKPGKK. A compositionally biased stretch (basic residues) spans 108–126; that stretch reads RTRKGPRRAIAGKKKPGKK.

The protein belongs to the universal ribosomal protein uS13 family. As to quaternary structure, part of the 30S ribosomal subunit. Forms a loose heterodimer with protein S19. Forms two bridges to the 50S subunit in the 70S ribosome.

Its function is as follows. Located at the top of the head of the 30S subunit, it contacts several helices of the 16S rRNA. In the 70S ribosome it contacts the 23S rRNA (bridge B1a) and protein L5 of the 50S subunit (bridge B1b), connecting the 2 subunits; these bridges are implicated in subunit movement. Contacts the tRNAs in the A and P-sites. This Streptomyces griseus subsp. griseus (strain JCM 4626 / CBS 651.72 / NBRC 13350 / KCC S-0626 / ISP 5235) protein is Small ribosomal subunit protein uS13.